The primary structure comprises 133 residues: Small ribosomal subunit protein uS8 (133 aa).

Belongs to the universal ribosomal protein uS8 family. As to quaternary structure, part of the 30S ribosomal subunit. Contacts proteins S5 and S12.

One of the primary rRNA binding proteins, it binds directly to 16S rRNA central domain where it helps coordinate assembly of the platform of the 30S subunit. The sequence is that of Small ribosomal subunit protein uS8 from Mycoplasma mobile (strain ATCC 43663 / 163K / NCTC 11711) (Mesomycoplasma mobile).